The sequence spans 1373 residues: Poly(A) RNA polymerase gld-2 homolog B (1373 aa).

Low complexity predominate over residues 75–91 (NSCHSSNSSSNTSNNNN). Disordered stretches follow at residues 75-155 (NSCH…QEKQ), 175-340 (SDCK…FWKT), 425-543 (PDST…QQQK), 734-770 (PQQQ…FADG), 802-866 (CGSG…ALGS), and 880-928 (HPLH…PTPV). The segment covering 96–112 (GQQQQPLHYCNSNNSHS) has biased composition (polar residues). Low complexity-rich tracts occupy residues 130-152 (QQQQ…QMQQ), 180-219 (SDSN…SCSN), 228-251 (NENS…NTSS), and 274-284 (ESGSSEGAAES). Polar residues-rich tracts occupy residues 295–340 (CNSN…FWKT) and 430–442 (KSSS…NMIR). A compositionally biased stretch (low complexity) spans 443-485 (SSSNGNSNFSRHQYGHQSTGSGYQQQQQRYRNAQNVYQQYQHQ). Residues 486–502 (QQHHAQQHTHPHFRRKH) are compositionally biased toward basic residues. Composition is skewed to low complexity over residues 735–753 (QQQQ…GTSS) and 819–844 (AGAL…SGTS). The segment covering 855 to 866 (PSISPTPSALGS) has biased composition (polar residues). Residues 880 to 890 (HPLHQQHPPSH) are compositionally biased toward low complexity. The sufficent for interaction with Dcr-2 stretch occupies residues 945 to 1373 (RYLAQARNIE…FAETTAAHVA (429 aa)). 2 residues coordinate Mg(2+): D1029 and D1031. A PAP-associated domain is found at 1211–1272 (TLGEHLLGFF…NIEEPFDLSN (62 aa)). The span at 1320-1341 (LQQHQQQFEQQLHHPISGQQRS) shows a compositional bias: low complexity. Residues 1320–1359 (LQQHQQQFEQQLHHPISGQQRSAGGGGDGANPVPSTLNPD) are disordered.

It belongs to the DNA polymerase type-B-like family. GLD2 subfamily. Interacts with orb, an RNA-binding protein, generating an ovarian cytoplasmic polyadenylation complex. Interacts (via C-terminus) with Dcr-2. Mg(2+) serves as cofactor. Requires Mn(2+) as cofactor. Expressed in ovaries. Not expressed in adult males.

The protein resides in the cytoplasm. It carries out the reaction RNA(n) + ATP = RNA(n)-3'-adenine ribonucleotide + diphosphate. Functionally, cytoplasmic poly(A) RNA polymerase that adds successive AMP monomers to the 3'-end of specific maternal RNAs (bcd, Tl, and tor), forming a poly(A) tail, during late oogenesis and early embryogenesis. In contrast to the canonical nuclear poly(A) RNA polymerase, it only adds poly(A) to selected cytoplasmic mRNAs. Required for localization of mRNAs to both poles of the egg, to recruit or maintain known centrosomal proteins with two types of microtubule organizing centers (MTOCs): the central MTOC that forms between the meiosis II tandem spindles and the centrosomes of the mitotic spindle. Required at the final stage of oogenesis for meiosis I metaphase arrest and for progression beyond this stage. Functions with the RNA-binding protein Dcr-2 to promote cytoplasmic polyadenylation and translational activation of certain mRNAs such as Tl and r2d2. As a consequence, is involved in regulating Toll immune signaling and promoting resistance to fungal infection. This is Poly(A) RNA polymerase gld-2 homolog B (wisp) from Drosophila melanogaster (Fruit fly).